Consider the following 73-residue polypeptide: Acyl carrier protein homolog (73 aa).

The Carrier domain occupies 1-72; the sequence is MAIKEWIITQ…DIIVLIEQKS (72 aa). The residue at position 32 (S32) is an O-(pantetheine 4'-phosphoryl)serine.

4'-phosphopantetheine is transferred from CoA to a specific serine of the apo-ACP-like protein.

The protein operates within lipid metabolism; fatty acid biosynthesis. Carrier of the growing fatty acid chain in fatty acid biosynthesis. This Mycoplasmopsis pulmonis (strain UAB CTIP) (Mycoplasma pulmonis) protein is Acyl carrier protein homolog.